The sequence spans 532 residues: E3 ubiquitin-protein ligase ICP0 (532 aa).

Zn(2+) is bound by residues Cys-8, Cys-11, Cys-24, His-26, Cys-29, Cys-32, Cys-43, and Cys-46. An RING-type zinc finger spans residues 8–47 (CPICLEDPSNYSMALPCLHAFCYVCITRWIRQNPTCPLCK). 4 disordered regions span residues 206-391 (EYID…PMRP), 406-426 (APRD…AGPR), 461-498 (EDES…IRQG), and 510-532 (QTQP…RRNQ). 2 stretches are compositionally biased toward acidic residues: residues 217–227 (SEEETDSDIEV) and 234–243 (DPEDTSDETS). A compositionally biased stretch (basic residues) spans 286 to 295 (RSARLRRRQP).

In terms of processing, auto-ubiquitinated.

The catalysed reaction is S-ubiquitinyl-[E2 ubiquitin-conjugating enzyme]-L-cysteine + [acceptor protein]-L-lysine = [E2 ubiquitin-conjugating enzyme]-L-cysteine + N(6)-ubiquitinyl-[acceptor protein]-L-lysine.. Evades nuclear antiviral defenses triggered by dsDNA viruses. Acts during the initial stages of lytic infection and the reactivation of latent viral genome. Prevents the antiviral effect of nuclear bodies by degrading host PML and SP100. This Equus caballus (Horse) protein is E3 ubiquitin-protein ligase ICP0 (63).